Reading from the N-terminus, the 184-residue chain is ATP synthase subunit b, chloroplastic (184 aa).

A helical transmembrane segment spans residues 27–49 (LATNPINLSVVLGVLIFFGKGVL).

Belongs to the ATPase B chain family. F-type ATPases have 2 components, F(1) - the catalytic core - and F(0) - the membrane proton channel. F(1) has five subunits: alpha(3), beta(3), gamma(1), delta(1), epsilon(1). F(0) has four main subunits: a(1), b(1), b'(1) and c(10-14). The alpha and beta chains form an alternating ring which encloses part of the gamma chain. F(1) is attached to F(0) by a central stalk formed by the gamma and epsilon chains, while a peripheral stalk is formed by the delta, b and b' chains.

The protein localises to the plastid. Its subcellular location is the chloroplast thylakoid membrane. Its function is as follows. F(1)F(0) ATP synthase produces ATP from ADP in the presence of a proton or sodium gradient. F-type ATPases consist of two structural domains, F(1) containing the extramembraneous catalytic core and F(0) containing the membrane proton channel, linked together by a central stalk and a peripheral stalk. During catalysis, ATP synthesis in the catalytic domain of F(1) is coupled via a rotary mechanism of the central stalk subunits to proton translocation. Functionally, component of the F(0) channel, it forms part of the peripheral stalk, linking F(1) to F(0). The polypeptide is ATP synthase subunit b, chloroplastic (Citrus sinensis (Sweet orange)).